Consider the following 355-residue polypeptide: Peptide chain release factor 1 (355 aa).

Q231 is subject to N5-methylglutamine. Basic and acidic residues predominate over residues 280-291; that stretch reads SERLAKESEARK. Residues 280-303 are disordered; the sequence is SERLAKESEARKSQVGSGDRSERI.

It belongs to the prokaryotic/mitochondrial release factor family. Methylated by PrmC. Methylation increases the termination efficiency of RF1.

The protein localises to the cytoplasm. Peptide chain release factor 1 directs the termination of translation in response to the peptide chain termination codons UAG and UAA. The sequence is that of Peptide chain release factor 1 from Campylobacter jejuni subsp. jejuni serotype O:6 (strain 81116 / NCTC 11828).